Reading from the N-terminus, the 83-residue chain is Cytochrome b559 subunit alpha (83 aa).

A helical membrane pass occupies residues 21–35 (VIHSITIPSLFVAGW). Residue H23 participates in heme binding.

Belongs to the PsbE/PsbF family. In terms of assembly, heterodimer of an alpha subunit and a beta subunit. PSII is composed of 1 copy each of membrane proteins PsbA, PsbB, PsbC, PsbD, PsbE, PsbF, PsbH, PsbI, PsbJ, PsbK, PsbL, PsbM, PsbT, PsbX, PsbY, PsbZ, Psb30/Ycf12, at least 3 peripheral proteins of the oxygen-evolving complex and a large number of cofactors. It forms dimeric complexes. Heme b serves as cofactor.

The protein localises to the plastid. It is found in the chloroplast thylakoid membrane. This b-type cytochrome is tightly associated with the reaction center of photosystem II (PSII). PSII is a light-driven water:plastoquinone oxidoreductase that uses light energy to abstract electrons from H(2)O, generating O(2) and a proton gradient subsequently used for ATP formation. It consists of a core antenna complex that captures photons, and an electron transfer chain that converts photonic excitation into a charge separation. The protein is Cytochrome b559 subunit alpha of Nephroselmis olivacea (Green alga).